The chain runs to 267 residues: Glucosamine-6-phosphate deaminase (267 aa).

The active-site Proton acceptor; for enolization step is the Asp72. Asp141 serves as the catalytic For ring-opening step. His143 acts as the Proton acceptor; for ring-opening step in catalysis. The For ring-opening step role is filled by Glu148.

This sequence belongs to the glucosamine/galactosamine-6-phosphate isomerase family. NagB subfamily. Homohexamer.

The catalysed reaction is alpha-D-glucosamine 6-phosphate + H2O = beta-D-fructose 6-phosphate + NH4(+). The protein operates within amino-sugar metabolism; N-acetylneuraminate degradation; D-fructose 6-phosphate from N-acetylneuraminate: step 5/5. Allosterically activated by N-acetylglucosamine 6-phosphate (GlcNAc6P). Catalyzes the reversible isomerization-deamination of glucosamine 6-phosphate (GlcN6P) to form fructose 6-phosphate (Fru6P) and ammonium ion. The polypeptide is Glucosamine-6-phosphate deaminase (Pasteurella multocida (strain Pm70)).